A 364-amino-acid chain; its full sequence is tRNA 2-selenouridine synthase (364 aa).

One can recognise a Rhodanese domain in the interval L14–I137. C97 serves as the catalytic S-selanylcysteine intermediate.

The protein belongs to the SelU family. In terms of assembly, monomer.

It catalyses the reaction 5-methylaminomethyl-2-thiouridine(34) in tRNA + selenophosphate + (2E)-geranyl diphosphate + H2O + H(+) = 5-methylaminomethyl-2-selenouridine(34) in tRNA + (2E)-thiogeraniol + phosphate + diphosphate. The enzyme catalyses 5-methylaminomethyl-2-thiouridine(34) in tRNA + (2E)-geranyl diphosphate = 5-methylaminomethyl-S-(2E)-geranyl-thiouridine(34) in tRNA + diphosphate. It carries out the reaction 5-methylaminomethyl-S-(2E)-geranyl-thiouridine(34) in tRNA + selenophosphate + H(+) = 5-methylaminomethyl-2-(Se-phospho)selenouridine(34) in tRNA + (2E)-thiogeraniol. The catalysed reaction is 5-methylaminomethyl-2-(Se-phospho)selenouridine(34) in tRNA + H2O = 5-methylaminomethyl-2-selenouridine(34) in tRNA + phosphate. In terms of biological role, involved in the post-transcriptional modification of the uridine at the wobble position (U34) of tRNA(Lys), tRNA(Glu) and tRNA(Gln). Catalyzes the conversion of 2-thiouridine (S2U-RNA) to 2-selenouridine (Se2U-RNA). Acts in a two-step process involving geranylation of 2-thiouridine (S2U) to S-geranyl-2-thiouridine (geS2U) and subsequent selenation of the latter derivative to 2-selenouridine (Se2U) in the tRNA chain. This Escherichia coli O81 (strain ED1a) protein is tRNA 2-selenouridine synthase.